Here is a 569-residue protein sequence, read N- to C-terminus: Urease subunit beta (569 aa).

The Urease domain occupies 131 to 569 (GGIDTHIHFI…VSLAQLFSIF (439 aa)). Ni(2+) is bound by residues H136, H138, and K219. Residue K219 is modified to N6-carboxylysine. Position 221 (H221) interacts with substrate. Residues H248 and H274 each coordinate Ni(2+). H322 (proton donor) is an active-site residue. D362 contributes to the Ni(2+) binding site.

The protein belongs to the metallo-dependent hydrolases superfamily. Urease alpha subunit family. Heterohexamer of 3 UreA (alpha) and 3 UreB (beta) subunits. Ni cation is required as a cofactor. Post-translationally, carboxylation allows a single lysine to coordinate two nickel ions.

The protein localises to the cytoplasm. The enzyme catalyses urea + 2 H2O + H(+) = hydrogencarbonate + 2 NH4(+). It functions in the pathway nitrogen metabolism; urea degradation; CO(2) and NH(3) from urea (urease route): step 1/1. This Helicobacter pylori (strain HPAG1) protein is Urease subunit beta.